The sequence spans 425 residues: Serine--tRNA ligase (425 aa).

231-233 (TAE) contributes to the L-serine binding site. An ATP-binding site is contributed by 262–264 (RSE). Glu-285 provides a ligand contact to L-serine. 349–352 (EISS) lines the ATP pocket. L-serine is bound at residue Ser-385.

This sequence belongs to the class-II aminoacyl-tRNA synthetase family. Type-1 seryl-tRNA synthetase subfamily. As to quaternary structure, homodimer. The tRNA molecule binds across the dimer.

It is found in the cytoplasm. The catalysed reaction is tRNA(Ser) + L-serine + ATP = L-seryl-tRNA(Ser) + AMP + diphosphate + H(+). It carries out the reaction tRNA(Sec) + L-serine + ATP = L-seryl-tRNA(Sec) + AMP + diphosphate + H(+). It participates in aminoacyl-tRNA biosynthesis; selenocysteinyl-tRNA(Sec) biosynthesis; L-seryl-tRNA(Sec) from L-serine and tRNA(Sec): step 1/1. Catalyzes the attachment of serine to tRNA(Ser). Is also able to aminoacylate tRNA(Sec) with serine, to form the misacylated tRNA L-seryl-tRNA(Sec), which will be further converted into selenocysteinyl-tRNA(Sec). This is Serine--tRNA ligase from Desulfosudis oleivorans (strain DSM 6200 / JCM 39069 / Hxd3) (Desulfococcus oleovorans).